The chain runs to 62 residues: UPF0434 protein Rleg2_3773 (62 aa).

It belongs to the UPF0434 family.

The protein is UPF0434 protein Rleg2_3773 of Rhizobium leguminosarum bv. trifolii (strain WSM2304).